The primary structure comprises 88 residues: Small ribosomal subunit protein uS17 (88 aa).

This sequence belongs to the universal ribosomal protein uS17 family. Part of the 30S ribosomal subunit.

Functionally, one of the primary rRNA binding proteins, it binds specifically to the 5'-end of 16S ribosomal RNA. This is Small ribosomal subunit protein uS17 from Pseudomonas entomophila (strain L48).